The chain runs to 296 residues: Peroxidase P7 (296 aa).

Position 1 is a pyrrolidone carboxylic acid (Gln1). Disulfide bonds link Cys11/Cys91, Cys44/Cys49, Cys97/Cys292, and Cys176/Cys201. Residue His42 is the Proton acceptor of the active site. 5 residues coordinate Ca(2+): Asp43, Val46, Gly48, Asp50, and Ser52. A substrate-binding site is contributed by Pro139. His169 contacts heme b. Thr170 contributes to the Ca(2+) binding site. The N-linked (GlcNAc...) asparagine glycan is linked to Asn185. Residues Asp216, Ser219, and Asp224 each coordinate Ca(2+).

The protein belongs to the peroxidase family. Classical plant (class III) peroxidase subfamily. Ca(2+) serves as cofactor. Heme b is required as a cofactor.

The enzyme catalyses 2 a phenolic donor + H2O2 = 2 a phenolic radical donor + 2 H2O. Functionally, removal of H(2)O(2), oxidation of toxic reductants, biosynthesis and degradation of lignin, suberization, auxin catabolism, response to environmental stresses such as wounding, pathogen attack and oxidative stress. These functions might be dependent on each isozyme/isoform in each plant tissue. In Brassica rapa subsp. rapa (Turnip), this protein is Peroxidase P7.